Consider the following 475-residue polypeptide: Nitrogenase vanadium-iron protein beta chain (475 aa).

Residues cysteine 31, cysteine 56, cysteine 115, and serine 153 each contribute to the [8Fe-7S] cluster site.

It belongs to the NifD/NifK/NifE/NifN family. As to quaternary structure, hexamer of two alpha, two beta, and two delta chains. Requires [8Fe-7S] cluster as cofactor.

The catalysed reaction is N2 + 8 reduced [2Fe-2S]-[ferredoxin] + 16 ATP + 16 H2O = H2 + 8 oxidized [2Fe-2S]-[ferredoxin] + 2 NH4(+) + 16 ADP + 16 phosphate + 6 H(+). This vanadium-iron protein is part of the nitrogenase complex that catalyzes the key enzymatic reactions in nitrogen fixation. In Azotobacter vinelandii, this protein is Nitrogenase vanadium-iron protein beta chain (vnfK).